The sequence spans 219 residues: Putative NAD(P)H nitroreductase SSP0379 (219 aa).

The protein belongs to the nitroreductase family. It depends on FMN as a cofactor.

In Staphylococcus saprophyticus subsp. saprophyticus (strain ATCC 15305 / DSM 20229 / NCIMB 8711 / NCTC 7292 / S-41), this protein is Putative NAD(P)H nitroreductase SSP0379.